The sequence spans 208 residues: MTGKKRSASSSRWLQEHFSDKYVQQAQKKGLRSRAWFKLDEIQQSDKLFKPGMTVVDLGAAPGGWSQYVVTQIGGKGRIIACDLLPMDPIVGVDFLQGDFRDELVMKALLERVGDSKVQVVMSDMAPNMSGTPAVDIPRAMYLVELALEMCRDVLAPGGSFVVKVFQGEGFDEYLREIRSLFTKVKIRKPDSSRARSREVYIVATGRK.

Residues Gly-63, Trp-65, Asp-83, Asp-99, and Asp-124 each coordinate S-adenosyl-L-methionine. Lys-164 functions as the Proton acceptor in the catalytic mechanism.

The protein belongs to the class I-like SAM-binding methyltransferase superfamily. RNA methyltransferase RlmE family.

It localises to the cytoplasm. It carries out the reaction uridine(2552) in 23S rRNA + S-adenosyl-L-methionine = 2'-O-methyluridine(2552) in 23S rRNA + S-adenosyl-L-homocysteine + H(+). Functionally, specifically methylates the uridine in position 2552 of 23S rRNA at the 2'-O position of the ribose in the fully assembled 50S ribosomal subunit. This Salmonella paratyphi A (strain ATCC 9150 / SARB42) protein is Ribosomal RNA large subunit methyltransferase E.